A 461-amino-acid polypeptide reads, in one-letter code: MAAAGLALQRYLLLLAQEHLEFRLPEITSLLSLCGGQFSSQQEVCVNSPFWILNIPSEEMARGLMRRTVCAKSIFELWGHGRSAGELYASLKNYPTDKMLPYLQPDSTYKIHIHTFNKTLTQAQKIKKIDALEFLPFSGKVNLKNPEHIFWILEDYGMDPNNVPEEPFDLYFGRWIADGQRELIESYSIKKRHFIGNTSMDACLSFIMANHGRVKPNDIVYDPFVGTGGLLISSAHFGAYVCGTGIDYNTIHGLGKASRKNQKWRGPDENIRANLRQYGLEKYYLDALVSDSSRPIWRKGTLFDAIITDPPYGIREATRRTGSQKESVKSSERSTENHIIISSSYHLSDIFFDLLKFAAEYLVMGGRLVYWLPIYRPEYTEEIVPRHPCLKLISNCEQMLSSHTSRRLITMEKVKEFKDQDQNSYLSDGQYMPYKGHNSFREKYFSGVTKRIAKEEKDNQK.

The protein belongs to the class I-like SAM-binding methyltransferase superfamily. TRM11 methyltransferase family. In terms of assembly, part of the heterodimeric TRMT11-TRM112 methyltransferase complex; this complex forms an active tRNA methyltransferase, where TRMT112 acts as an activator of the catalytic subunit TRMT11.

The protein localises to the cytoplasm. The enzyme catalyses guanosine(10) in tRNA + S-adenosyl-L-methionine = N(2)-methylguanosine(10) in tRNA + S-adenosyl-L-homocysteine + H(+). Its function is as follows. Catalytic subunit of the TRMT11-TRM112 methyltransferase complex, that specifically mediates the S-adenosyl-L-methionine-dependent N(2)-methylation of guanosine nucleotide at position 10 (m2G10) in tRNAs. This is one of the major tRNA (guanine-N(2))-methyltransferases. The protein is tRNA (guanine(10)-N(2))-methyltransferase TRMT11 of Gallus gallus (Chicken).